Here is a 545-residue protein sequence, read N- to C-terminus: MTSRKILVTSALPYANGEIHLGHLLEYIQTDIWVRFQKMMGNECHYVCADDAHGTAIMLKADELDITPEVLIKNMSNKHQIDFQSFSIDFSQYHSTHSQENKDISTNIYNKLNVAGFIKTRVISQAFDPLKQMFLADRFIKGDCPKCGSNEQYGDNCEVCGATYSSIELKNAKSVISGVTPITKDSEHYFFDLPQFEVQLKEWTKAGHLQDAISNKLSEWFKEGLQQWDISRDAPYFGFQIPAVEGKYFYVWLDAPIGYMASFKKLCDEQNIDFNEYFNKDSNTELYHFIGKDIIYFHALFWPAMLIGSNYRTPSAIFAHGFLTINGQKMSKSRGTFIQARTYLNYLNPEYLRYYYAYKLSSKIDDIDLNLIDFKQRINSDLVGKVVNIASRSAGFIVKKFNKTLSSYTIESKFYQEFFDCGDIIAKHYEARNYNQAMRVIIKLANKANQYIDKHKPWQLIKKPNQQTQVHDVTSLAINLFRVLMTYLKPVLPIMAKQVEKFLNIDELHWQDLKYPLIKHQINTFKPLMLRIEDDQIERIIEASK.

Positions proline 13 to histidine 23 match the 'HIGH' region motif. Residues cysteine 144, cysteine 147, cysteine 157, and cysteine 160 each contribute to the Zn(2+) site. A 'KMSKS' region motif is present at residues lysine 329–serine 333. Lysine 332 contacts ATP.

The protein belongs to the class-I aminoacyl-tRNA synthetase family. MetG type 1 subfamily. As to quaternary structure, monomer. It depends on Zn(2+) as a cofactor.

It localises to the cytoplasm. It carries out the reaction tRNA(Met) + L-methionine + ATP = L-methionyl-tRNA(Met) + AMP + diphosphate. Is required not only for elongation of protein synthesis but also for the initiation of all mRNA translation through initiator tRNA(fMet) aminoacylation. The polypeptide is Methionine--tRNA ligase (Vesicomyosocius okutanii subsp. Calyptogena okutanii (strain HA)).